The primary structure comprises 486 residues: MRDDRERGEGDLSWPLIGEKSSVKEEVKKQLWLSGPLIAVSLLQFCLQVISVMFVGHLGSLPLSAASIATSFASVTGFSFLMGTASALDTLCGQAYGAKKYGMLGIQMQRAMFVLTLASIPLSIIWANTEHLLVFFGQNKSIATLAGSYAKFMIPSIFAYGLLQCFNRFLQAQNNVFPVVFCSGVTTSLHVLLCWVLVFKSGLGFQGAALANSISYWLNVVLLFCYVKFSPSCSLTWTGFSKEALRDILPFLRLAVPSALMVCLEMWSFELLVLLSGLLPNPVLETSVLSICLNTSGTMWMIPFGLSGAASTRISNELGAGNPKVAKLAVRVVICIAVAESIVIGSVLILIRNIWGLAYSSELEVVSYVASMMPILALGNFLDSLQCVLSGVARGCGWQKIGAIINLGSYYLVGVPSGLLLAFHFHVGGRGLWLGIICALVVQVFGLGLVTIFTNWDEEAKKATNRIESSSSVKDFAVDDRSVVVF.

The next 12 membrane-spanning stretches (helical) occupy residues 35 to 55 (GPLIAVSLLQFCLQVISVMFV), 68 to 88 (IATSFASVTGFSFLMGTASAL), 117 to 137 (LASIPLSIIWANTEHLLVFFG), 142 to 162 (IATLAGSYAKFMIPSIFAYGL), 179 to 199 (VVFCSGVTTSLHVLLCWVLVF), 207 to 227 (GAALANSISYWLNVVLLFCYV), 259 to 279 (ALMVCLEMWSFELLVLLSGLL), 288 to 308 (VLSICLNTSGTMWMIPFGLSG), 331 to 351 (RVVICIAVAESIVIGSVLILI), 365 to 385 (VVSYVASMMPILALGNFLDSL), 401 to 421 (IGAIINLGSYYLVGVPSGLLL), and 433 to 453 (WLGIICALVVQVFGLGLVTIF).

This sequence belongs to the multi antimicrobial extrusion (MATE) (TC 2.A.66.1) family.

It localises to the membrane. This chain is Protein DETOXIFICATION 16, found in Arabidopsis thaliana (Mouse-ear cress).